Reading from the N-terminus, the 402-residue chain is MVCARAALGPGALWAAAWGVLLLTAPAGAQRGRKKVVHVLEGESGSVVVQTAPGQVVSHRGGTIVLPCRYHYEAAAHGHDGVRLKWTKVVDPLAFTDVFVALGPQHRAFGSYRGRAELQGDGPGDASLVLRNVTLQDYGRYECEVTNELEDDAGMVKLDLEGVVFPYHPRGGRYKLTFAEAQRACAEQDGILASAEQLHAAWRDGLDWCNAGWLRDGSVQYPVNRPREPCGGLGGTGSAGGGGDANGGLRNYGYRHNAEERYDAFCFTSNLPGRVFFLKPLRPVPFSGAARACAARGAAVAKVGQLFAAWKLQLLDRCTAGWLADGSARYPIVNPRARCGGRRPGVRSLGFPDATRRLFGVYCYRAPGAPDPAPGGWGWGWAGGGGWAGGARDPAAWTPLHV.

A signal peptide spans 1 to 29 (MVCARAALGPGALWAAAWGVLLLTAPAGA). The 116-residue stretch at 46-161 (SVVVQTAPGQ…DAGMVKLDLE (116 aa)) folds into the Ig-like C2-type domain. Intrachain disulfides connect C68-C143, C185-C266, C209-C230, C293-C363, and C318-C339. N-linked (GlcNAc...) asparagine glycosylation is present at N132. Link domains follow at residues 163-268 (VVFP…FCFT) and 273-365 (GRVF…YCYR).

Belongs to the HAPLN family. Expressed predominantly in brain.

It localises to the secreted. The protein resides in the extracellular space. Its subcellular location is the extracellular matrix. Functionally, essential for the proper localization of brevican (BCAN), mainly as a perineuronal nets (PNNs)-type deposition in the brainstem and cerebellum thereby playing a key role in the formation and structural organization of PNNs. Contributes to the formation and transmission of inhibitory GABAergic synapses between Purkinje cells and deep cerebellar nuclei neurons. This is Hyaluronan and proteoglycan link protein 4 (HAPLN4) from Homo sapiens (Human).